A 177-amino-acid polypeptide reads, in one-letter code: Large ribosomal subunit protein uL6 (177 aa).

The protein belongs to the universal ribosomal protein uL6 family. As to quaternary structure, part of the 50S ribosomal subunit.

This protein binds to the 23S rRNA, and is important in its secondary structure. It is located near the subunit interface in the base of the L7/L12 stalk, and near the tRNA binding site of the peptidyltransferase center. This chain is Large ribosomal subunit protein uL6, found in Cereibacter sphaeroides (strain ATCC 17025 / ATH 2.4.3) (Rhodobacter sphaeroides).